We begin with the raw amino-acid sequence, 123 residues long: Large ribosomal subunit protein uL14c (123 aa).

It belongs to the universal ribosomal protein uL14 family. Part of the 50S ribosomal subunit.

The protein localises to the plastid. The protein resides in the chloroplast. Its function is as follows. Binds to 23S rRNA. The sequence is that of Large ribosomal subunit protein uL14c from Triticum aestivum (Wheat).